We begin with the raw amino-acid sequence, 155 residues long: Small ribosomal subunit protein eS19B (155 aa).

Belongs to the eukaryotic ribosomal protein eS19 family.

The sequence is that of Small ribosomal subunit protein eS19B (RpS19b) from Drosophila melanogaster (Fruit fly).